We begin with the raw amino-acid sequence, 243 residues long: Geranylgeranylglyceryl phosphate synthase (243 aa).

2 residues coordinate Mg(2+): D22 and S51. Sn-glycerol 1-phosphate is bound by residues 170 to 176, 201 to 202, and 223 to 224; these read YLESGSG, GG, and GT.

It belongs to the GGGP/HepGP synthase family. Group II subfamily. The cofactor is Mg(2+).

Its subcellular location is the cytoplasm. It catalyses the reaction sn-glycerol 1-phosphate + (2E,6E,10E)-geranylgeranyl diphosphate = sn-3-O-(geranylgeranyl)glycerol 1-phosphate + diphosphate. It functions in the pathway membrane lipid metabolism; glycerophospholipid metabolism. Prenyltransferase that catalyzes the transfer of the geranylgeranyl moiety of geranylgeranyl diphosphate (GGPP) to the C3 hydroxyl of sn-glycerol-1-phosphate (G1P). This reaction is the first ether-bond-formation step in the biosynthesis of archaeal membrane lipids. The polypeptide is Geranylgeranylglyceryl phosphate synthase (Picrophilus torridus (strain ATCC 700027 / DSM 9790 / JCM 10055 / NBRC 100828 / KAW 2/3)).